Consider the following 333-residue polypeptide: Anthranilate phosphoribosyltransferase (333 aa).

5-phospho-alpha-D-ribose 1-diphosphate-binding positions include G80, 83-84, S88, 90-93, 108-116, and S120; these read GD, NIST, and KHGNRSVSS. Residue G80 coordinates anthranilate. S92 is a Mg(2+) binding site. N111 serves as a coordination point for anthranilate. An anthranilate-binding site is contributed by R166. Residues D224 and E225 each coordinate Mg(2+).

It belongs to the anthranilate phosphoribosyltransferase family. As to quaternary structure, homodimer. It depends on Mg(2+) as a cofactor.

The catalysed reaction is N-(5-phospho-beta-D-ribosyl)anthranilate + diphosphate = 5-phospho-alpha-D-ribose 1-diphosphate + anthranilate. The protein operates within amino-acid biosynthesis; L-tryptophan biosynthesis; L-tryptophan from chorismate: step 2/5. Functionally, catalyzes the transfer of the phosphoribosyl group of 5-phosphorylribose-1-pyrophosphate (PRPP) to anthranilate to yield N-(5'-phosphoribosyl)-anthranilate (PRA). This chain is Anthranilate phosphoribosyltransferase, found in Yersinia pseudotuberculosis serotype O:1b (strain IP 31758).